Reading from the N-terminus, the 470-residue chain is Neuraminidase (470 aa).

At 1-14 the chain is on the intravirion side; it reads MNPNQKIIAIGSAS. Positions 11–32 are involved in apical transport and lipid raft association; sequence GSASLGILILNVILHVVSIIVT. Residues 15 to 35 form a helical membrane-spanning segment; sequence LGILILNVILHVVSIIVTVLV. The hypervariable stalk region stretch occupies residues 32–86; that stretch reads TVLVLNNNGTGLNCNGTIIREYNETVRVERITQWYNTNTIEYIERPSNEYYMNNT. Topologically, residues 36-470 are virion surface; the sequence is LNNNGTGLNC…AILPFDIDKI (435 aa). Asn-39, Asn-46, Asn-54, and Asn-84 each carry an N-linked (GlcNAc...) asparagine; by host glycan. Positions 89 to 470 are head of neuraminidase; it reads LCEAQGFAPF…AILPFDIDKI (382 aa). Cystine bridges form between Cys-90–Cys-417, Cys-122–Cys-127, Cys-182–Cys-229, Cys-231–Cys-236, Cys-277–Cys-290, Cys-279–Cys-288, Cys-316–Cys-335, and Cys-421–Cys-446. Residue Arg-116 participates in substrate binding. A glycan (N-linked (GlcNAc...) asparagine; by host) is linked at Asn-144. The Proton donor/acceptor role is filled by Asp-149. Arg-150 provides a ligand contact to substrate. 275–276 contributes to the substrate binding site; the sequence is EE. Arg-291 provides a ligand contact to substrate. Asp-292 contributes to the Ca(2+) binding site. Asn-293 carries N-linked (GlcNAc...) asparagine; by host glycosylation. Gly-296 and Asp-322 together coordinate Ca(2+). Arg-368 contributes to the substrate binding site. The N-linked (GlcNAc...) asparagine; by host glycan is linked to Asn-398. The active-site Nucleophile is Tyr-402.

It belongs to the glycosyl hydrolase 34 family. Homotetramer. Ca(2+) serves as cofactor. In terms of processing, N-glycosylated.

Its subcellular location is the virion membrane. The protein resides in the host apical cell membrane. It catalyses the reaction Hydrolysis of alpha-(2-&gt;3)-, alpha-(2-&gt;6)-, alpha-(2-&gt;8)- glycosidic linkages of terminal sialic acid residues in oligosaccharides, glycoproteins, glycolipids, colominic acid and synthetic substrates.. With respect to regulation, inhibited by the neuraminidase inhibitors zanamivir (Relenza) and oseltamivir (Tamiflu). These drugs interfere with the release of progeny virus from infected cells and are effective against all influenza strains. Resistance to neuraminidase inhibitors is quite rare. Catalyzes the removal of terminal sialic acid residues from viral and cellular glycoconjugates. Cleaves off the terminal sialic acids on the glycosylated HA during virus budding to facilitate virus release. Additionally helps virus spread through the circulation by further removing sialic acids from the cell surface. These cleavages prevent self-aggregation and ensure the efficient spread of the progeny virus from cell to cell. Otherwise, infection would be limited to one round of replication. Described as a receptor-destroying enzyme because it cleaves a terminal sialic acid from the cellular receptors. May facilitate viral invasion of the upper airways by cleaving the sialic acid moieties on the mucin of the airway epithelial cells. Likely to plays a role in the budding process through its association with lipid rafts during intracellular transport. May additionally display a raft-association independent effect on budding. Plays a role in the determination of host range restriction on replication and virulence. Sialidase activity in late endosome/lysosome traffic seems to enhance virus replication. This Influenza A virus (strain A/Equine/Kentucky/1/1981) protein is Neuraminidase.